The following is a 208-amino-acid chain: 3-isopropylmalate dehydratase small subunit 2 (208 aa).

Belongs to the LeuD family. LeuD type 1 subfamily. As to quaternary structure, heterodimer of LeuC and LeuD.

It carries out the reaction (2R,3S)-3-isopropylmalate = (2S)-2-isopropylmalate. It functions in the pathway amino-acid biosynthesis; L-leucine biosynthesis; L-leucine from 3-methyl-2-oxobutanoate: step 2/4. Functionally, catalyzes the isomerization between 2-isopropylmalate and 3-isopropylmalate, via the formation of 2-isopropylmaleate. This chain is 3-isopropylmalate dehydratase small subunit 2, found in Salmonella choleraesuis (strain SC-B67).